The primary structure comprises 399 residues: Telomeric repeat-binding factor 2-interacting protein 1 (399 aa).

The tract at residues 1–21 is disordered; the sequence is MAEAMELGKDPNGPTHSSTLF. Ala-2 bears the N-acetylalanine mark. Residues 10–101 enclose the BRCT domain; sequence DPNGPTHSST…EKLELEAYRL (92 aa). A phosphoserine mark is found at Ser-36 and Ser-43. Lys-114 participates in a covalent cross-link: Glycyl lysine isopeptide (Lys-Gly) (interchain with G-Cter in SUMO2). Residues 130 to 190 enclose the Myb-like domain; that stretch reads QSQAGRMVFT…SMKDRYLKRL (61 aa). Ser-156 and Ser-158 each carry phosphoserine. Residue Lys-196 forms a Glycyl lysine isopeptide (Lys-Gly) (interchain with G-Cter in SUMO2) linkage. 2 disordered regions span residues 199 to 245 and 279 to 309; these read LGEA…KEEI and TMCD…VSAP. Phosphoserine is present on residues Ser-205 and Ser-208. Residues Lys-210, Lys-214, and Lys-242 each participate in a glycyl lysine isopeptide (Lys-Gly) (interchain with G-Cter in SUMO2) cross-link. Acidic residues predominate over residues 281–304; the sequence is CDDDPCTPEEDSETQPDEEEEEEE. Residue Lys-372 forms a Glycyl lysine isopeptide (Lys-Gly) (interchain with G-Cter in SUMO2) linkage. Positions 383-399 match the Nuclear localization signal motif; that stretch reads KKFGAQNVARRIEFRKK.

It belongs to the RAP1 family. Associates with the I-kappa-B-kinase (IKK) core complex, composed of CHUK, IKBKB and IKBKG. Homodimer. Component of the shelterin complex (telosome) composed of TERF1, TERF2, TINF2, TERF2IP ACD and POT1. Interacts with TERF2 (but not TERF1) with its C-terminus. Interacts with SLX4/BTBD12. Interacts with TERF2; the interaction is direct.

It localises to the nucleus. Its subcellular location is the cytoplasm. The protein resides in the chromosome. The protein localises to the telomere. Its function is as follows. Acts both as a regulator of telomere function and as a transcription regulator. Involved in the regulation of telomere length and protection as a component of the shelterin complex (telosome). In contrast to other components of the shelterin complex, it is dispensible for telomere capping and does not participate in the protection of telomeres against non-homologous end-joining (NHEJ)-mediated repair. Instead, it is required to negatively regulate telomere recombination and is essential for repressing homology-directed repair (HDR), which can affect telomere length. Does not bind DNA directly: recruited to telomeric double-stranded 5'-TTAGGG-3' repeats via its interaction with TERF2. Independently of its function in telomeres, also acts as a transcription regulator: recruited to extratelomeric 5'-TTAGGG-3' sites via its association with TERF2 or other factors, and regulates gene expression. When cytoplasmic, associates with the I-kappa-B-kinase (IKK) complex and acts as a regulator of the NF-kappa-B signaling by promoting IKK-mediated phosphorylation of RELA/p65, leading to activate expression of NF-kappa-B target genes. This Bos taurus (Bovine) protein is Telomeric repeat-binding factor 2-interacting protein 1 (TERF2IP).